The following is a 190-amino-acid chain: Ribosome maturation factor RimP (190 aa).

The interval 159 to 190 (ELELAGGIPEGRVAPADADASEDEEVVEGLDK) is disordered. The segment covering 177 to 190 (DASEDEEVVEGLDK) has biased composition (acidic residues).

It belongs to the RimP family.

The protein localises to the cytoplasm. Required for maturation of 30S ribosomal subunits. The chain is Ribosome maturation factor RimP from Rhodococcus opacus (strain B4).